Reading from the N-terminus, the 115-residue chain is Phosphoribosyl-ATP pyrophosphatase (115 aa).

It belongs to the PRA-PH family.

It is found in the cytoplasm. The catalysed reaction is 1-(5-phospho-beta-D-ribosyl)-ATP + H2O = 1-(5-phospho-beta-D-ribosyl)-5'-AMP + diphosphate + H(+). It participates in amino-acid biosynthesis; L-histidine biosynthesis; L-histidine from 5-phospho-alpha-D-ribose 1-diphosphate: step 2/9. In Bordetella parapertussis (strain 12822 / ATCC BAA-587 / NCTC 13253), this protein is Phosphoribosyl-ATP pyrophosphatase.